The sequence spans 188 residues: dTTP/UTP pyrophosphatase (188 aa).

D70 functions as the Proton acceptor in the catalytic mechanism.

The protein belongs to the Maf family. YhdE subfamily. The cofactor is a divalent metal cation.

The protein resides in the cytoplasm. It catalyses the reaction dTTP + H2O = dTMP + diphosphate + H(+). It carries out the reaction UTP + H2O = UMP + diphosphate + H(+). In terms of biological role, nucleoside triphosphate pyrophosphatase that hydrolyzes dTTP and UTP. May have a dual role in cell division arrest and in preventing the incorporation of modified nucleotides into cellular nucleic acids. In Clostridium botulinum (strain Alaska E43 / Type E3), this protein is dTTP/UTP pyrophosphatase.